Here is a 251-residue protein sequence, read N- to C-terminus: Small ribosomal subunit protein uS2 (251 aa).

S2 carries the post-translational modification N-acetylserine. A disordered region spans residues 209-251; it reads EIEQQTAEEAAQEAGEEEAKEEVTEEQTEAAEWAQENADNVEW. Positions 218 to 237 are enriched in acidic residues; sequence AAQEAGEEEAKEEVTEEQTE. Low complexity predominate over residues 238 to 251; the sequence is AAEWAQENADNVEW.

It belongs to the universal ribosomal protein uS2 family. Component of the small ribosomal subunit. Mature ribosomes consist of a small (40S) and a large (60S) subunit. The 40S subunit contains about 33 different proteins and 1 molecule of RNA (18S). The 60S subunit contains about 49 different proteins and 3 molecules of RNA (25S, 5.8S and 5S). Interacts with RPS21.

The protein resides in the cytoplasm. Its function is as follows. Required for the assembly and/or stability of the 40S ribosomal subunit. Required for the processing of the 20S rRNA-precursor to mature 18S rRNA in a late step of the maturation of 40S ribosomal subunits. The polypeptide is Small ribosomal subunit protein uS2 (Candida glabrata (strain ATCC 2001 / BCRC 20586 / JCM 3761 / NBRC 0622 / NRRL Y-65 / CBS 138) (Yeast)).